The following is a 314-amino-acid chain: Testisin (314 aa).

A signal peptide spans 1-19; it reads MGARGALLLALLLARAGLR. Residues 20–41 constitute a propeptide that is removed on maturation; that stretch reads KPESQEAAPLSGPCGRRVITSR. Disulfide bonds link cysteine 33/cysteine 157 and cysteine 67/cysteine 83. In terms of domain architecture, Peptidase S1 spans 42–286; sequence IVGGEDAELG…HFEWIQKLMA (245 aa). Active-site charge relay system residues include histidine 82 and aspartate 137. 2 N-linked (GlcNAc...) asparagine glycosylation sites follow: asparagine 167 and asparagine 200. 3 disulfides stabilise this stretch: cysteine 171–cysteine 244, cysteine 204–cysteine 223, and cysteine 234–cysteine 262. The active-site Charge relay system is serine 238. N-linked (GlcNAc...) asparagine glycosylation is present at asparagine 273. Residue serine 288 is the site of GPI-anchor amidated serine attachment. Residues 289-314 constitute a propeptide, removed in mature form; sequence GMSQPDPSWPLLFFPLLWALPLLGPV.

It belongs to the peptidase S1 family. As to expression, expressed predominantly in premeiotic testicular germ cells, mostly late pachytene and diplotene spermatocytes.

The protein resides in the cell membrane. Its function is as follows. Could regulate proteolytic events associated with testicular germ cell maturation. This chain is Testisin (PRSS21), found in Homo sapiens (Human).